The following is a 326-amino-acid chain: Phospho-N-acetylmuramoyl-pentapeptide-transferase (326 aa).

Helical transmembrane passes span 2-22 (ILAT…FPYF), 51-71 (VPPM…LLWV), 73-93 (LTPE…LGFI), 113-133 (ILIQ…YSAE), 143-163 (GVII…IVGS), 175-195 (GLAA…AYIT), 199-219 (MNIT…LWFN), 225-245 (IFMG…TSVL), 250-270 (MLFA…IIQI), and 305-325 (VIVM…ITFL).

This sequence belongs to the glycosyltransferase 4 family. MraY subfamily. It depends on Mg(2+) as a cofactor.

It localises to the cell membrane. It catalyses the reaction UDP-N-acetyl-alpha-D-muramoyl-L-alanyl-gamma-D-glutamyl-meso-2,6-diaminopimeloyl-D-alanyl-D-alanine + di-trans,octa-cis-undecaprenyl phosphate = di-trans,octa-cis-undecaprenyl diphospho-N-acetyl-alpha-D-muramoyl-L-alanyl-D-glutamyl-meso-2,6-diaminopimeloyl-D-alanyl-D-alanine + UMP. It participates in cell wall biogenesis; peptidoglycan biosynthesis. Its function is as follows. Catalyzes the initial step of the lipid cycle reactions in the biosynthesis of the cell wall peptidoglycan: transfers peptidoglycan precursor phospho-MurNAc-pentapeptide from UDP-MurNAc-pentapeptide onto the lipid carrier undecaprenyl phosphate, yielding undecaprenyl-pyrophosphoryl-MurNAc-pentapeptide, known as lipid I. This is Phospho-N-acetylmuramoyl-pentapeptide-transferase from Wolbachia sp. subsp. Drosophila simulans (strain wRi).